Here is a 440-residue protein sequence, read N- to C-terminus: L-gulonolactone oxidase (440 aa).

Residues 17–187 (YGCSPEMYYQ…LTVTLQCVPQ (171 aa)) form the FAD-binding PCMH-type domain. The residue at position 54 (histidine 54) is a Pros-8alpha-FAD histidine. A helical transmembrane segment spans residues 251-273 (IGFYLLEFLLWTSTYLPRLVGWI).

It belongs to the oxygen-dependent FAD-linked oxidoreductase family. Requires FAD as cofactor. Highly expressed in liver.

It is found in the microsome membrane. The protein resides in the endoplasmic reticulum membrane. The enzyme catalyses L-gulono-1,4-lactone + O2 = L-ascorbate + H2O2 + H(+). Its pathway is cofactor biosynthesis; L-ascorbate biosynthesis via UDP-alpha-D-glucuronate pathway; L-ascorbate from UDP-alpha-D-glucuronate: step 4/4. Functionally, oxidizes L-gulono-1,4-lactone to hydrogen peroxide and L-xylo-hexulonolactone which spontaneously isomerizes to L-ascorbate. The protein is L-gulonolactone oxidase (Gulo) of Mus musculus (Mouse).